The following is a 128-amino-acid chain: Holin-like protein CidA (128 aa).

The next 3 helical transmembrane spans lie at 23–43 (LIVE…IVIF), 58–78 (IGAL…AVGI), and 84–104 (ILAE…FVVM).

Belongs to the CidA/LrgA family. CidA subfamily.

Its subcellular location is the cell membrane. Increases the activity of extracellular murein hydrolases possibly by mediating their export via hole formation. Inhibited by the antiholin-like proteins LrgAB. In an unstressed cell, the LrgAB products probably inhibit the function of the CidA protein. When a cell is stressed by the addition of antibiotics or by other factors in the environment, CidA possibly oligomerizes within the bacterial cell membrane, creating lesions that disrupt the proton motive force, which in turn results in loss of cell viability. These lesions are also hypothesized to regulate the subsequent cell lysis by either allowing the murein hydrolases access to the cell wall substrate and/or regulating their activity by a possible change in the cell wall pH that results from loss of membrane potential. This Bacillus licheniformis (strain ATCC 14580 / DSM 13 / JCM 2505 / CCUG 7422 / NBRC 12200 / NCIMB 9375 / NCTC 10341 / NRRL NRS-1264 / Gibson 46) protein is Holin-like protein CidA.